The chain runs to 290 residues: 33 kDa chaperonin (290 aa).

2 disulfides stabilise this stretch: C231–C233 and C263–C266.

The protein belongs to the HSP33 family. Under oxidizing conditions two disulfide bonds are formed involving the reactive cysteines. Under reducing conditions zinc is bound to the reactive cysteines and the protein is inactive.

It is found in the cytoplasm. Redox regulated molecular chaperone. Protects both thermally unfolding and oxidatively damaged proteins from irreversible aggregation. Plays an important role in the bacterial defense system toward oxidative stress. This Thermotoga sp. (strain RQ2) protein is 33 kDa chaperonin.